The chain runs to 91 residues: Protein transport protein Sec61 subunit beta (91 aa).

The interval Met1–Ser45 is disordered. The Cytoplasmic segment spans residues Met1–Pro62. Residues Gln30–Ser45 show a composition bias toward polar residues. Residues Val63 to Ala83 form a helical membrane-spanning segment.

The protein belongs to the SEC61-beta family. As to quaternary structure, heterotrimeric complex composed of SEC61, SEB1 and SSS1.

The protein localises to the endoplasmic reticulum membrane. Its function is as follows. Necessary for protein translocation in the endoplasmic reticulum. The protein is Protein transport protein Sec61 subunit beta (SBH1) of Yarrowia lipolytica (strain CLIB 122 / E 150) (Yeast).